A 405-amino-acid polypeptide reads, in one-letter code: Probable glucan 1,3-beta-glucosidase A (405 aa).

A signal peptide spans 1 to 26 (MFPRISQAAILAHSLLAVCTSAATLA). Glu-198 functions as the Proton donor in the catalytic mechanism. 2 disulfides stabilise this stretch: Cys-278/Cys-403 and Cys-304/Cys-330. The Nucleophile role is filled by Glu-296.

It belongs to the glycosyl hydrolase 5 (cellulase A) family. As to quaternary structure, monomer. It depends on Mn(2+) as a cofactor.

It is found in the secreted. The enzyme catalyses Successive hydrolysis of beta-D-glucose units from the non-reducing ends of (1-&gt;3)-beta-D-glucans, releasing alpha-glucose.. Its function is as follows. Beta-glucanases participate in the metabolism of beta-glucan, the main structural component of the cell wall. It could also function biosynthetically as a transglycosylase. This Emericella nidulans (strain FGSC A4 / ATCC 38163 / CBS 112.46 / NRRL 194 / M139) (Aspergillus nidulans) protein is Probable glucan 1,3-beta-glucosidase A (exgA).